The primary structure comprises 376 residues: Arabinogalactan endo-beta-1,4-galactanase (376 aa).

Residues 1-17 (MKKKILAATAILLAAIA) form the signal peptide. The active-site Proton donor is glutamate 161. The Nucleophile role is filled by glutamate 270. 2 residues coordinate Ca(2+): aspartate 281 and asparagine 285.

Belongs to the glycosyl hydrolase 53 family. Ca(2+) serves as cofactor.

It carries out the reaction The enzyme specifically hydrolyzes (1-&gt;4)-beta-D-galactosidic linkages in type I arabinogalactans.. This is Arabinogalactan endo-beta-1,4-galactanase (ganB) from Cellvibrio japonicus (strain Ueda107) (Pseudomonas fluorescens subsp. cellulosa).